The chain runs to 281 residues: ATP phosphoribosyltransferase (281 aa).

This sequence belongs to the ATP phosphoribosyltransferase family. Long subfamily. Requires Mg(2+) as cofactor.

Its subcellular location is the cytoplasm. It catalyses the reaction 1-(5-phospho-beta-D-ribosyl)-ATP + diphosphate = 5-phospho-alpha-D-ribose 1-diphosphate + ATP. Its pathway is amino-acid biosynthesis; L-histidine biosynthesis; L-histidine from 5-phospho-alpha-D-ribose 1-diphosphate: step 1/9. Its activity is regulated as follows. Feedback inhibited by histidine. In terms of biological role, catalyzes the condensation of ATP and 5-phosphoribose 1-diphosphate to form N'-(5'-phosphoribosyl)-ATP (PR-ATP). Has a crucial role in the pathway because the rate of histidine biosynthesis seems to be controlled primarily by regulation of HisG enzymatic activity. This chain is ATP phosphoribosyltransferase, found in Corynebacterium aurimucosum (strain ATCC 700975 / DSM 44827 / CIP 107346 / CN-1) (Corynebacterium nigricans).